The following is a 310-amino-acid chain: Olfactory receptor 9A2 (310 aa).

The Extracellular segment spans residues methionine 1–histidine 24. N-linked (GlcNAc...) asparagine glycosylation occurs at asparagine 4. A helical transmembrane segment spans residues isoleucine 25–isoleucine 45. The Cytoplasmic portion of the chain corresponds to valine 46–arginine 53. A helical transmembrane segment spans residues leucine 54–threonine 74. The Extracellular segment spans residues isoleucine 75–serine 98. Topologically, residues aspartate 117–serine 135 are cytoplasmic. Residues threonine 136 to isoleucine 156 traverse the membrane as a helical segment. Over tyrosine 157 to phenylalanine 193 the chain is Extracellular. The chain crosses the membrane as a helical span at residues isoleucine 194–serine 213. Over tyrosine 214–alanine 233 the chain is Cytoplasmic. Residues phenylalanine 234–leucine 254 form a helical membrane-spanning segment. Residues tyrosine 255–asparagine 267 are Extracellular-facing. A helical transmembrane segment spans residues lysine 268–leucine 288. Over arginine 289–aspartate 310 the chain is Cytoplasmic.

It belongs to the G-protein coupled receptor 1 family.

The protein resides in the cell membrane. Odorant receptor. In Homo sapiens (Human), this protein is Olfactory receptor 9A2 (OR9A2).